A 75-amino-acid polypeptide reads, in one-letter code: CDC42 small effector protein 2-B (75 aa).

S-palmitoyl cysteine attachment occurs at residues cysteine 10 and cysteine 11. In terms of domain architecture, CRIB spans 29–42; sequence IGEPMNFVHTAHVG.

It belongs to the CDC42SE/SPEC family.

Its subcellular location is the cytoplasm. The protein localises to the cytoskeleton. It localises to the cell membrane. In terms of biological role, probably involved in the organization of the actin cytoskeleton by acting downstream of CDC42, inducing actin filament assembly. The protein is CDC42 small effector protein 2-B (cdc42se2-b) of Xenopus laevis (African clawed frog).